The following is a 483-amino-acid chain: Glutamyl-tRNA(Gln) amidotransferase subunit A (483 aa).

Active-site charge relay system residues include Lys76 and Ser151. Residue Ser175 is the Acyl-ester intermediate of the active site.

It belongs to the amidase family. GatA subfamily. As to quaternary structure, heterotrimer of A, B and C subunits.

The catalysed reaction is L-glutamyl-tRNA(Gln) + L-glutamine + ATP + H2O = L-glutaminyl-tRNA(Gln) + L-glutamate + ADP + phosphate + H(+). Its function is as follows. Allows the formation of correctly charged Gln-tRNA(Gln) through the transamidation of misacylated Glu-tRNA(Gln) in organisms which lack glutaminyl-tRNA synthetase. The reaction takes place in the presence of glutamine and ATP through an activated gamma-phospho-Glu-tRNA(Gln). This is Glutamyl-tRNA(Gln) amidotransferase subunit A from Pseudomonas syringae pv. tomato (strain ATCC BAA-871 / DC3000).